Consider the following 471-residue polypeptide: Ubiquitin carboxyl-terminal hydrolase calypso (471 aa).

In terms of domain architecture, UCH catalytic spans 45 to 276 (GWLELESDPG…IRFNLMAVVP (232 aa)). The active-site Nucleophile is Cys-131. The active-site Proton donor is His-213. Residues 307-326 (DEQGESGNGDSQRPDTPTTL) form a disordered region. Residues 314 to 326 (NGDSQRPDTPTTL) are compositionally biased toward polar residues. The ULD domain maps to 375–403 (NYDKFICTFLSMLAHQGVLGELVSQHLLP). Residues 405–471 (KKVSGQGAAN…KGRNKCRKRK (67 aa)) form a positively charged C-terminal tail required for binding nucleosomes region. The tract at residues 412-471 (AANRISKQSNTASAGGSTTGASASTPKTQQQQAAAAKNGKSPSKTPGRRRKGRNKCRKRK) is disordered. Low complexity predominate over residues 422–447 (TASAGGSTTGASASTPKTQQQQAAAA). A compositionally biased stretch (basic residues) spans 457–471 (PGRRRKGRNKCRKRK).

Belongs to the peptidase C12 family. BAP1 subfamily. Catalytic component of the polycomb repressive deubiquitinase (PR-DUB) complex, at least composed of caly/calypso, Asx and sba (MBD5/6 homolog). The PR-DUB complex associates with nucleosomes to mediate deubiquitination of histone H2AK118ub1 substrates; the association requires the positively charged C-terminal tail of caly, probably due to direct binding of DNA. Interacts (via ULD domain) with Asx (via DEUBAD domain); the interaction produces a stable heterodimer with a composite binding site for ubiquitin. Homodimerizes (via coiled-coil hinge-region between the UCH and ULD domains) to mediate assembly of 2 copies of the caly-Asx heterodimer into a bisymmetric tetramer; dimerization enhances PR-DUB association with nucleosomes.

The protein resides in the nucleus. The enzyme catalyses Thiol-dependent hydrolysis of ester, thioester, amide, peptide and isopeptide bonds formed by the C-terminal Gly of ubiquitin (a 76-residue protein attached to proteins as an intracellular targeting signal).. In terms of biological role, catalytic component of the polycomb repressive deubiquitinase (PR-DUB) complex, a complex that specifically mediates deubiquitination of histone H2A monoubiquitinated at 'Lys-119' (H2AK118ub1). Mediates bisymmetric organization of the PR-DUB complex and is involved in association with nucleosomes to mediate deubiquitination. Does not deubiquitinate monoubiquitinated histone H2B. Required to maintain the transcriptionally repressive state of homeotic genes throughout development. The PR-DUB complex has weak or no activity toward 'Lys-48'- and 'Lys-63'-linked polyubiquitin chains. Polycomb group (PcG) protein. The protein is Ubiquitin carboxyl-terminal hydrolase calypso of Drosophila sechellia (Fruit fly).